The following is a 213-amino-acid chain: Dephospho-CoA kinase (213 aa).

Residues 3–202 form the DPCK domain; the sequence is RIGLTGGIGS…QSYLALADKH (200 aa). 11–16 serves as a coordination point for ATP; that stretch reads GSGKTR.

Belongs to the CoaE family.

Its subcellular location is the cytoplasm. It catalyses the reaction 3'-dephospho-CoA + ATP = ADP + CoA + H(+). Its pathway is cofactor biosynthesis; coenzyme A biosynthesis; CoA from (R)-pantothenate: step 5/5. In terms of biological role, catalyzes the phosphorylation of the 3'-hydroxyl group of dephosphocoenzyme A to form coenzyme A. This Bordetella avium (strain 197N) protein is Dephospho-CoA kinase.